A 648-amino-acid chain; its full sequence is ATP-dependent DNA helicase Q1 (648 aa).

One can recognise a Helicase ATP-binding domain in the interval 100–275 (INVTMARKDI…QKILCVGKCL (176 aa)). 113-120 (MPTGGGKS) contributes to the ATP binding site. The DEVH box motif lies at 219-222 (DEVH). Residues 299–451 (DFTEDIVKLI…EMVSYCQNVS (153 aa)) form the Helicase C-terminal domain. Positions 453, 471, 475, and 478 each coordinate Zn(2+). 2 positions are modified to N6-acetyllysine: lysine 514 and lysine 522. Serine 597 bears the Phosphoserine mark. The disordered stretch occupies residues 601-648 (ALSEARQVEQVDSKGEEQSSGNSQKSKSRLQPSGSKNAGAKKRKLDDA). Residues 606–617 (RQVEQVDSKGEE) show a composition bias toward basic and acidic residues. A compositionally biased stretch (polar residues) spans 618-636 (QSSGNSQKSKSRLQPSGSK). Serine 633 carries the post-translational modification Phosphoserine. Over residues 639–648 (GAKKRKLDDA) the composition is skewed to basic residues.

The protein belongs to the helicase family. RecQ subfamily. May form homodimers or higher order oligomers. Interacts with EXO1. Interacts with MLH1. Interacts with PARP1. Mg(2+) serves as cofactor. The cofactor is Mn(2+). Requires Zn(2+) as cofactor. As to expression, expressed in all tissues examined. Only expressed in spermatocytes. Expression increases at pachytene (17 days old) and decreases after completion of meiosis II (7 weeks old).

The protein localises to the nucleus. It carries out the reaction Couples ATP hydrolysis with the unwinding of duplex DNA by translocating in the 3'-5' direction.. The enzyme catalyses ATP + H2O = ADP + phosphate + H(+). It catalyses the reaction dATP + H2O = dADP + phosphate + H(+). Its function is as follows. DNA helicase that plays a role in DNA damage repair and genome stability. Exhibits a magnesium- and ATP-dependent DNA-helicase activity that unwinds single- and double-stranded DNA in a 3'-5' direction. Plays a role in restoring regressed replication forks. Required to restart stalled replication forks induced by abortive topoisomerase 1 and 2 lesions. May play a role in the repair of DNA that is damaged by ultraviolet light or other mutagens. This is ATP-dependent DNA helicase Q1 (Recql) from Mus musculus (Mouse).